A 571-amino-acid polypeptide reads, in one-letter code: Penicillin-binding protein activator LpoA (571 aa).

An N-terminal signal peptide occupies residues 1-26; sequence MMTILLQHTHLKNRLMPFLLALFLAG. Residue Cys27 is the site of N-palmitoyl cysteine attachment. A lipid anchor (S-diacylglycerol cysteine) is attached at Cys27.

This sequence belongs to the LpoA family. Interacts with PBP1a.

The protein resides in the cell outer membrane. Its function is as follows. Regulator of peptidoglycan synthesis that is essential for the function of penicillin-binding protein 1A (PBP1a). The sequence is that of Penicillin-binding protein activator LpoA from Pasteurella multocida (strain Pm70).